Consider the following 111-residue polypeptide: uncharacterized protein (111 aa).

This is an uncharacterized protein from Escherichia coli (Bacteriophage T4).